The sequence spans 367 residues: Protein-glutamate methylesterase/protein-glutamine glutaminase (367 aa).

The region spanning R6–E123 is the Response regulatory domain. D57 is modified (4-aspartylphosphate). One can recognise a CheB-type methylesterase domain in the interval I165–Y361. Catalysis depends on residues S177, H204, and D303.

The protein belongs to the CheB family. Phosphorylated by CheA. Phosphorylation of the N-terminal regulatory domain activates the methylesterase activity.

The protein localises to the cytoplasm. It catalyses the reaction [protein]-L-glutamate 5-O-methyl ester + H2O = L-glutamyl-[protein] + methanol + H(+). It carries out the reaction L-glutaminyl-[protein] + H2O = L-glutamyl-[protein] + NH4(+). Involved in chemotaxis. Part of a chemotaxis signal transduction system that modulates chemotaxis in response to various stimuli. Catalyzes the demethylation of specific methylglutamate residues introduced into the chemoreceptors (methyl-accepting chemotaxis proteins or MCP) by CheR. Also mediates the irreversible deamidation of specific glutamine residues to glutamic acid. This Caldanaerobacter subterraneus subsp. tengcongensis (strain DSM 15242 / JCM 11007 / NBRC 100824 / MB4) (Thermoanaerobacter tengcongensis) protein is Protein-glutamate methylesterase/protein-glutamine glutaminase.